The primary structure comprises 516 residues: Homeobox protein 6 (516 aa).

A compositionally biased stretch (low complexity) spans 22–31 (NYDFDNKNNS). 3 disordered regions span residues 22–140 (NYDF…PNCN), 200–256 (SLNN…SSPS), and 268–348 (DEND…NNGD). A compositionally biased stretch (gly residues) spans 32–41 (IGGGGGGGGS). Composition is skewed to low complexity over residues 42-59 (SSSR…SSSG), 66-78 (SNSS…IINS), and 101-132 (TTTT…NSSS). Residues 284–346 (NNNNNNNNNN…NNNNTNTNNN (63 aa)) show a composition bias toward low complexity. 2 consecutive DNA-binding regions (homeobox) follow at residues 362 to 421 (KSGQ…SKSG) and 424 to 483 (SYAK…NKLS). Residues 483 to 516 (SSKAIQDKDNQDNDNNNSNNNENNDDSYSDEGLF) form a disordered region. The span at 495 to 504 (NDNNNSNNNE) shows a compositional bias: low complexity. A compositionally biased stretch (acidic residues) spans 505 to 516 (NNDDSYSDEGLF).

The protein localises to the nucleus. Functionally, putative transcription factor. The sequence is that of Homeobox protein 6 (hbx6) from Dictyostelium discoideum (Social amoeba).